The sequence spans 247 residues: 2,3-bisphosphoglycerate-dependent phosphoglycerate mutase (247 aa).

Substrate-binding positions include 8-15 (RHGESTWN), 21-22 (TG), Arg60, 87-90 (ERHY), Lys98, 114-115 (RR), and 183-184 (GN). His9 acts as the Tele-phosphohistidine intermediate in catalysis. The active-site Proton donor/acceptor is the Glu87.

This sequence belongs to the phosphoglycerate mutase family. BPG-dependent PGAM subfamily. In terms of assembly, homodimer.

The catalysed reaction is (2R)-2-phosphoglycerate = (2R)-3-phosphoglycerate. It functions in the pathway carbohydrate degradation; glycolysis; pyruvate from D-glyceraldehyde 3-phosphate: step 3/5. Its function is as follows. Catalyzes the interconversion of 2-phosphoglycerate and 3-phosphoglycerate. The polypeptide is 2,3-bisphosphoglycerate-dependent phosphoglycerate mutase (Acidovorax ebreus (strain TPSY) (Diaphorobacter sp. (strain TPSY))).